The chain runs to 309 residues: Homoserine O-succinyltransferase (309 aa).

The active-site Acyl-thioester intermediate is cysteine 142. Positions 163 and 192 each coordinate substrate. Histidine 235 (proton acceptor) is an active-site residue. Residue glutamate 237 is part of the active site. Residue arginine 249 coordinates substrate.

This sequence belongs to the MetA family.

The protein resides in the cytoplasm. The enzyme catalyses L-homoserine + succinyl-CoA = O-succinyl-L-homoserine + CoA. It participates in amino-acid biosynthesis; L-methionine biosynthesis via de novo pathway; O-succinyl-L-homoserine from L-homoserine: step 1/1. Transfers a succinyl group from succinyl-CoA to L-homoserine, forming succinyl-L-homoserine. This Photorhabdus laumondii subsp. laumondii (strain DSM 15139 / CIP 105565 / TT01) (Photorhabdus luminescens subsp. laumondii) protein is Homoserine O-succinyltransferase.